The sequence spans 633 residues: DNA-directed RNA polymerase subunit gamma (633 aa).

Zn(2+)-binding residues include Cys74, Cys76, Cys89, and Cys92. Mg(2+)-binding residues include Asp471, Asp473, and Asp475.

This sequence belongs to the RNA polymerase beta' chain family. RpoC1 subfamily. As to quaternary structure, in cyanobacteria the RNAP catalytic core is composed of 2 alpha, 1 beta, 1 beta', 1 gamma and 1 omega subunit. When a sigma factor is associated with the core the holoenzyme is formed, which can initiate transcription. It depends on Mg(2+) as a cofactor. Requires Zn(2+) as cofactor.

It catalyses the reaction RNA(n) + a ribonucleoside 5'-triphosphate = RNA(n+1) + diphosphate. Functionally, DNA-dependent RNA polymerase catalyzes the transcription of DNA into RNA using the four ribonucleoside triphosphates as substrates. The sequence is that of DNA-directed RNA polymerase subunit gamma from Prochlorococcus marinus (strain MIT 9211).